A 102-amino-acid chain; its full sequence is Large ribosomal subunit protein eL30 (102 aa).

It belongs to the eukaryotic ribosomal protein eL30 family. In terms of assembly, part of the 50S ribosomal subunit.

The sequence is that of Large ribosomal subunit protein eL30 from Thermococcus kodakarensis (strain ATCC BAA-918 / JCM 12380 / KOD1) (Pyrococcus kodakaraensis (strain KOD1)).